The sequence spans 228 residues: Ankyrin repeat domain-containing protein 46 (228 aa).

ANK repeat units lie at residues 11-40, 44-74, 77-103, and 107-138; these read QTNV…DPNI, RGRT…PLAT, QGNT…KIDI, and QGAT…EVKG. Residues 195–215 form a helical membrane-spanning segment; it reads VLLLILVIALLSLGIAYYVSG.

Its subcellular location is the membrane. The sequence is that of Ankyrin repeat domain-containing protein 46 (Ankrd46) from Mus musculus (Mouse).